Consider the following 403-residue polypeptide: Acetylornithine aminotransferase (403 aa).

Pyridoxal 5'-phosphate is bound by residues 107 to 108 (GA) and Phe140. Residue Arg143 participates in N(2)-acetyl-L-ornithine binding. 225 to 228 (DEVQ) serves as a coordination point for pyridoxal 5'-phosphate. Lys254 is modified (N6-(pyridoxal phosphate)lysine). A N(2)-acetyl-L-ornithine-binding site is contributed by Ser282. Pyridoxal 5'-phosphate is bound at residue Thr283.

It belongs to the class-III pyridoxal-phosphate-dependent aminotransferase family. ArgD subfamily. In terms of assembly, homodimer. Pyridoxal 5'-phosphate is required as a cofactor.

The protein localises to the cytoplasm. The catalysed reaction is N(2)-acetyl-L-ornithine + 2-oxoglutarate = N-acetyl-L-glutamate 5-semialdehyde + L-glutamate. It participates in amino-acid biosynthesis; L-arginine biosynthesis; N(2)-acetyl-L-ornithine from L-glutamate: step 4/4. The polypeptide is Acetylornithine aminotransferase (Vibrio parahaemolyticus serotype O3:K6 (strain RIMD 2210633)).